The following is a 212-amino-acid chain: Thymidylate kinase (212 aa).

11–18 (GPEGAGKT) is an ATP binding site.

This sequence belongs to the thymidylate kinase family.

The enzyme catalyses dTMP + ATP = dTDP + ADP. Functionally, phosphorylation of dTMP to form dTDP in both de novo and salvage pathways of dTTP synthesis. The polypeptide is Thymidylate kinase (Streptococcus pneumoniae serotype 19F (strain G54)).